We begin with the raw amino-acid sequence, 361 residues long: G-protein coupled receptor 183 (361 aa).

The Extracellular segment spans residues 1-31; it reads MDIQMANNFTPPSATPQGNDCDLYAHHSTAR. Residues 32 to 57 traverse the membrane as a helical segment; the sequence is IVMPLHYSLVFIIGLVGNLLALVVIV. At 58-77 the chain is on the cytoplasmic side; the sequence is QNRKKINSTTLYSTNLVISD. Residues 78 to 95 form a helical membrane-spanning segment; the sequence is ILFTTALPTRIAYYAMGF. R87 lines the 7alpha,25-dihydroxycholesterol pocket. At 96-105 the chain is on the extracellular side; it reads DWRIGDALCR. An intrachain disulfide couples C104 to C181. Residues 106–127 traverse the membrane as a helical segment; the sequence is ITALVFYINTYAGVNFMTCLSI. 7alpha,25-dihydroxycholesterol contacts are provided by Y112 and Y116. The interaction with G proteins stretch occupies residues 126-134; the sequence is SIDRFIAVV. Topologically, residues 128–149 are cytoplasmic; that stretch reads DRFIAVVHPLRYNKIKRIEHAK. Residues 150-168 form a helical membrane-spanning segment; that stretch reads GVCIFVWILVFAQTLPLLI. Over 169 to 192 the chain is Extracellular; sequence NPMSKQEAERITCMEYPNFEETKS. A helical membrane pass occupies residues 193 to 215; sequence LPWILLGACFIGYVLPLIIILIC. Over 216–241 the chain is Cytoplasmic; sequence YSQICCKLFRTAKQNPLTEKSGVNKK. Residues 242-265 traverse the membrane as a helical segment; sequence ALNTIILIIVVFVLCFTPYHVAII. Y260 contacts 7alpha,25-dihydroxycholesterol. Topologically, residues 266–287 are extracellular; that stretch reads QHMIKKLRFSNFLECSQRHSFQ. The chain crosses the membrane as a helical span at residues 288–312; sequence ISLHFTVCLMNFNCCMDPFIYFFAC. The Cytoplasmic portion of the chain corresponds to 313-361; that stretch reads KGYKRKVMRMLKRQVSVSISSAVKSAPEENSREMTETQMMIHSKSSNGK. Phosphoserine is present on S328. Positions 340-361 are disordered; that stretch reads EENSREMTETQMMIHSKSSNGK. The span at 348-361 shows a compositional bias: polar residues; that stretch reads ETQMMIHSKSSNGK.

This sequence belongs to the G-protein coupled receptor 1 family. Homodimer and heterodimer. Heterodimerizes with CXCR5; leading to modulate the interaction between of CXCL13 and CXCR5. Expressed abundantly in lymphoid tissues such as spleen and lymph node, and in B- and T-lymphocytes. Also highly expressed in lung, heart and gastrointestinal tract, and weakly expressed in the urogenital system and brain. Expressed in astrocytes.

The protein localises to the cell membrane. In terms of biological role, G-protein coupled receptor expressed in lymphocytes that acts as a chemotactic receptor for B-cells, T-cells, splenic dendritic cells, monocytes/macrophages and astrocytes. Receptor for oxysterol 7-alpha,25-dihydroxycholesterol (7-alpha,25-OHC) and other related oxysterols. Mediates cell positioning and movement of a number of cells by binding the 7-alpha,25-OHC ligand that forms a chemotactic gradient. Binding of 7-alpha,25-OHC mediates the correct localization of B-cells during humoral immune responses. Guides B-cell movement along the B-cell zone-T-cell zone boundary and later to interfollicular and outer follicular regions. Its specific expression during B-cell maturation helps position B-cells appropriately for mounting T-dependent antibody responses. Collaborates with CXCR5 to mediate B-cell migration; probably by forming a heterodimer with CXCR5 that affects the interaction between of CXCL13 and CXCR5. Also acts as a chemotactic receptor for some T-cells upon binding to 7-alpha,25-OHC ligand. Promotes follicular helper T (Tfh) cells differentiation by positioning activated T-cells at the follicle-T-zone interface, promoting contact of newly activated CD4 T-cells with activated dendritic cells and exposing them to Tfh-cell-promoting inducible costimulator (ICOS) ligand. Expression in splenic dendritic cells is required for their homeostasis, localization and ability to induce B- and T-cell responses: GPR183 acts as a chemotactic receptor in dendritic cells that mediates the accumulation of CD4(+) dendritic cells in bridging channels. Regulates migration of astrocytes and is involved in communication between astrocytes and macrophages. Promotes osteoclast precursor migration to bone surfaces. Signals constitutively through G(i)-alpha, but not G(s)-alpha or G(q)-alpha. Signals constitutively also via MAPK1/3 (ERK1/2). This is G-protein coupled receptor 183 from Homo sapiens (Human).